Here is a 1153-residue protein sequence, read N- to C-terminus: Probable RNA-dependent RNA polymerase 3 (1153 aa).

It belongs to the RdRP family. Expressed in shoot apical meristem (SAM) and panicles.

The enzyme catalyses RNA(n) + a ribonucleoside 5'-triphosphate = RNA(n+1) + diphosphate. Its function is as follows. Probably involved in the RNA silencing pathway and required for the generation of small interfering RNAs (siRNAs). This Oryza sativa subsp. japonica (Rice) protein is Probable RNA-dependent RNA polymerase 3 (RDR3).